The sequence spans 255 residues: Geranylgeranylglyceryl phosphate synthase (255 aa).

Mg(2+) is bound by residues aspartate 26 and serine 55. Residues 174-180 (YLEAGSG), 205-206 (GG), and 227-228 (GT) contribute to the sn-glycerol 1-phosphate site.

This sequence belongs to the GGGP/HepGP synthase family. Group II subfamily. Requires Mg(2+) as cofactor.

It localises to the cytoplasm. It carries out the reaction sn-glycerol 1-phosphate + (2E,6E,10E)-geranylgeranyl diphosphate = sn-3-O-(geranylgeranyl)glycerol 1-phosphate + diphosphate. It participates in membrane lipid metabolism; glycerophospholipid metabolism. Functionally, prenyltransferase that catalyzes the transfer of the geranylgeranyl moiety of geranylgeranyl diphosphate (GGPP) to the C3 hydroxyl of sn-glycerol-1-phosphate (G1P). This reaction is the first ether-bond-formation step in the biosynthesis of archaeal membrane lipids. The protein is Geranylgeranylglyceryl phosphate synthase of Thermococcus sibiricus (strain DSM 12597 / MM 739).